The following is a 371-amino-acid chain: Choline kinase B1 (371 aa).

The protein belongs to the choline/ethanolamine kinase family. Requires Mg(2+) as cofactor.

It catalyses the reaction choline + ATP = phosphocholine + ADP + H(+). The protein is Choline kinase B1 (ckb-1) of Caenorhabditis elegans.